The following is a 20-amino-acid chain: Expansin-B (20 aa).

Residues 1-20 are disordered; it reads GPPKVAPGKXISASFGGEWL.

The protein belongs to the expansin family. Expansin B subfamily.

The protein resides in the secreted. The protein localises to the cell wall. Its subcellular location is the membrane. Its function is as follows. May aid fertilization by loosening the cell wall of the stigma and style, thereby facilitating penetration of the pollen tube. Acts selectively on grass cell walls, which are relatively poor in pectins and xyloglucans and rich in glucuronoarabinoxylans and (1-3),(1-4)-beta-D-glucans, when compared with cell walls of other angiosperms, including other monocots. The chain is Expansin-B from Paspalum notatum (Bahia grass).